Reading from the N-terminus, the 432-residue chain is Cysteine desulfurase, mitosomal (432 aa).

Residues 102–103 (AT), Gln212, and 232–234 (CAH) each bind pyridoxal 5'-phosphate. N6-(pyridoxal phosphate)lysine is present on Lys235. Residue Thr272 participates in pyridoxal 5'-phosphate binding. Cys357 (cysteine persulfide intermediate) is an active-site residue. Position 357 (Cys357) interacts with [2Fe-2S] cluster.

It belongs to the class-V pyridoxal-phosphate-dependent aminotransferase family. NifS/IscS subfamily. It depends on pyridoxal 5'-phosphate as a cofactor.

The protein localises to the mitosome. The enzyme catalyses (sulfur carrier)-H + L-cysteine = (sulfur carrier)-SH + L-alanine. Functionally, catalyzes the removal of elemental sulfur from cysteine to produce alanine. It supplies the inorganic sulfur for iron-sulfur (Fe-S) clusters in mitosomes. This Encephalitozoon cuniculi (strain GB-M1) (Microsporidian parasite) protein is Cysteine desulfurase, mitosomal.